The sequence spans 212 residues: Peptide methionine sulfoxide reductase MsrA (212 aa).

Cys52 is a catalytic residue.

This sequence belongs to the MsrA Met sulfoxide reductase family.

The enzyme catalyses L-methionyl-[protein] + [thioredoxin]-disulfide + H2O = L-methionyl-(S)-S-oxide-[protein] + [thioredoxin]-dithiol. The catalysed reaction is [thioredoxin]-disulfide + L-methionine + H2O = L-methionine (S)-S-oxide + [thioredoxin]-dithiol. Its function is as follows. Has an important function as a repair enzyme for proteins that have been inactivated by oxidation. Catalyzes the reversible oxidation-reduction of methionine sulfoxide in proteins to methionine. This Salmonella agona (strain SL483) protein is Peptide methionine sulfoxide reductase MsrA.